Reading from the N-terminus, the 735-residue chain is DNA ligase 1 (735 aa).

Basic and acidic residues predominate over residues M1–A11. A disordered region spans residues M1–R23. Residues D48–D52, S97–L98, and E128 each bind NAD(+). K130 acts as the N6-AMP-lysine intermediate in catalysis. NAD(+) is bound by residues R151, E188, K305, and K329. Zn(2+) is bound by residues C423, C426, C442, and C448. Positions E643–S732 constitute a BRCT domain.

It belongs to the NAD-dependent DNA ligase family. LigA subfamily. It depends on Mg(2+) as a cofactor. Mn(2+) serves as cofactor.

It carries out the reaction NAD(+) + (deoxyribonucleotide)n-3'-hydroxyl + 5'-phospho-(deoxyribonucleotide)m = (deoxyribonucleotide)n+m + AMP + beta-nicotinamide D-nucleotide.. In terms of biological role, DNA ligase that catalyzes the formation of phosphodiester linkages between 5'-phosphoryl and 3'-hydroxyl groups in double-stranded DNA using NAD as a coenzyme and as the energy source for the reaction. It is essential for DNA replication and repair of damaged DNA. This Streptomyces coelicolor (strain ATCC BAA-471 / A3(2) / M145) protein is DNA ligase 1.